The following is a 245-amino-acid chain: Uridylate kinase (245 aa).

12–15 is a binding site for ATP; sequence KISG. Residue Gly-55 participates in UMP binding. Residues Gly-56 and Arg-60 each contribute to the ATP site. UMP-binding positions include Asp-76 and 137 to 144; that span reads AGAPYLTT. Thr-164, Tyr-171, and Asp-174 together coordinate ATP.

It belongs to the UMP kinase family. Homohexamer.

The protein resides in the cytoplasm. It carries out the reaction UMP + ATP = UDP + ADP. The protein operates within pyrimidine metabolism; CTP biosynthesis via de novo pathway; UDP from UMP (UMPK route): step 1/1. With respect to regulation, inhibited by UTP. Functionally, catalyzes the reversible phosphorylation of UMP to UDP. This chain is Uridylate kinase, found in Chlamydia muridarum (strain MoPn / Nigg).